The chain runs to 139 residues: Actin-depolymerizing factor 3 (139 aa).

The region spanning 5 to 139 is the ADF-H domain; that stretch reads ASGMAVHDDC…DLDVFKSRAN (135 aa). Residue S6 is modified to Phosphoserine.

This sequence belongs to the actin-binding proteins ADF family.

It localises to the cytoplasm. The protein resides in the cytoskeleton. Its function is as follows. Actin-depolymerizing protein. Severs actin filaments (F-actin) and binds to actin monomers. The polypeptide is Actin-depolymerizing factor 3 (ADF3) (Arabidopsis thaliana (Mouse-ear cress)).